The following is a 156-amino-acid chain: Crossover junction endodeoxyribonuclease RuvC (156 aa).

Catalysis depends on residues D7, E67, and D140. The Mg(2+) site is built by D7, E67, and D140.

It belongs to the RuvC family. Homodimer which binds Holliday junction (HJ) DNA. The HJ becomes 2-fold symmetrical on binding to RuvC with unstacked arms; it has a different conformation from HJ DNA in complex with RuvA. In the full resolvosome a probable DNA-RuvA(4)-RuvB(12)-RuvC(2) complex forms which resolves the HJ. Mg(2+) serves as cofactor.

Its subcellular location is the cytoplasm. The catalysed reaction is Endonucleolytic cleavage at a junction such as a reciprocal single-stranded crossover between two homologous DNA duplexes (Holliday junction).. In terms of biological role, the RuvA-RuvB-RuvC complex processes Holliday junction (HJ) DNA during genetic recombination and DNA repair. Endonuclease that resolves HJ intermediates. Cleaves cruciform DNA by making single-stranded nicks across the HJ at symmetrical positions within the homologous arms, yielding a 5'-phosphate and a 3'-hydroxyl group; requires a central core of homology in the junction. The consensus cleavage sequence is 5'-(A/T)TT(C/G)-3'. Cleavage occurs on the 3'-side of the TT dinucleotide at the point of strand exchange. HJ branch migration catalyzed by RuvA-RuvB allows RuvC to scan DNA until it finds its consensus sequence, where it cleaves and resolves the cruciform DNA. The polypeptide is Crossover junction endodeoxyribonuclease RuvC (Rickettsia felis (strain ATCC VR-1525 / URRWXCal2) (Rickettsia azadi)).